A 398-amino-acid chain; its full sequence is Dual-specificity RNA methyltransferase RlmN (398 aa).

Catalysis depends on glutamate 100, which acts as the Proton acceptor. The Radical SAM core domain maps to 106–345 (DGDRGTLCVS…TTVRTTRGDD (240 aa)). An intrachain disulfide couples cysteine 113 to cysteine 350. Positions 120, 124, and 127 each coordinate [4Fe-4S] cluster. Residues 174–175 (GE), serine 206, 228–230 (SLH), and asparagine 307 each bind S-adenosyl-L-methionine. Cysteine 350 acts as the S-methylcysteine intermediate in catalysis.

It belongs to the radical SAM superfamily. RlmN family. [4Fe-4S] cluster serves as cofactor.

It localises to the cytoplasm. It catalyses the reaction adenosine(2503) in 23S rRNA + 2 reduced [2Fe-2S]-[ferredoxin] + 2 S-adenosyl-L-methionine = 2-methyladenosine(2503) in 23S rRNA + 5'-deoxyadenosine + L-methionine + 2 oxidized [2Fe-2S]-[ferredoxin] + S-adenosyl-L-homocysteine. The catalysed reaction is adenosine(37) in tRNA + 2 reduced [2Fe-2S]-[ferredoxin] + 2 S-adenosyl-L-methionine = 2-methyladenosine(37) in tRNA + 5'-deoxyadenosine + L-methionine + 2 oxidized [2Fe-2S]-[ferredoxin] + S-adenosyl-L-homocysteine. Functionally, specifically methylates position 2 of adenine 2503 in 23S rRNA and position 2 of adenine 37 in tRNAs. m2A2503 modification seems to play a crucial role in the proofreading step occurring at the peptidyl transferase center and thus would serve to optimize ribosomal fidelity. The sequence is that of Dual-specificity RNA methyltransferase RlmN from Saccharophagus degradans (strain 2-40 / ATCC 43961 / DSM 17024).